A 333-amino-acid chain; its full sequence is Fructose-1,6-bisphosphatase class 1 1 (333 aa).

Glu81, Asp100, Leu102, and Asp103 together coordinate Mg(2+). Substrate contacts are provided by residues 103 to 106 (DGSS) and Asn191. Glu263 contacts Mg(2+).

This sequence belongs to the FBPase class 1 family. As to quaternary structure, homotetramer. Requires Mg(2+) as cofactor.

It is found in the cytoplasm. The catalysed reaction is beta-D-fructose 1,6-bisphosphate + H2O = beta-D-fructose 6-phosphate + phosphate. It participates in carbohydrate biosynthesis; gluconeogenesis. Fructose-1,6-bisphosphatase II is not light-activated. This Cereibacter sphaeroides (Rhodobacter sphaeroides) protein is Fructose-1,6-bisphosphatase class 1 1.